The chain runs to 193 residues: Non-canonical purine NTP pyrophosphatase homolog (193 aa).

It belongs to the HAM1 NTPase family.

The chain is Non-canonical purine NTP pyrophosphatase homolog from Halalkalibacterium halodurans (strain ATCC BAA-125 / DSM 18197 / FERM 7344 / JCM 9153 / C-125) (Bacillus halodurans).